Reading from the N-terminus, the 258-residue chain is Imidazole glycerol phosphate synthase subunit HisF (258 aa).

Catalysis depends on residues Asp11 and Asp130.

It belongs to the HisA/HisF family. As to quaternary structure, heterodimer of HisH and HisF.

It is found in the cytoplasm. The catalysed reaction is 5-[(5-phospho-1-deoxy-D-ribulos-1-ylimino)methylamino]-1-(5-phospho-beta-D-ribosyl)imidazole-4-carboxamide + L-glutamine = D-erythro-1-(imidazol-4-yl)glycerol 3-phosphate + 5-amino-1-(5-phospho-beta-D-ribosyl)imidazole-4-carboxamide + L-glutamate + H(+). It participates in amino-acid biosynthesis; L-histidine biosynthesis; L-histidine from 5-phospho-alpha-D-ribose 1-diphosphate: step 5/9. Functionally, IGPS catalyzes the conversion of PRFAR and glutamine to IGP, AICAR and glutamate. The HisF subunit catalyzes the cyclization activity that produces IGP and AICAR from PRFAR using the ammonia provided by the HisH subunit. The chain is Imidazole glycerol phosphate synthase subunit HisF from Nitrobacter winogradskyi (strain ATCC 25391 / DSM 10237 / CIP 104748 / NCIMB 11846 / Nb-255).